Here is a 392-residue protein sequence, read N- to C-terminus: UPF0229 protein CPE1333 (392 aa).

Residues 75 to 100 are disordered; sequence VTTGTGEERRGDRISSDKRKAISNNK. A compositionally biased stretch (basic and acidic residues) spans 80-94; that stretch reads GEERRGDRISSDKRK.

The protein belongs to the UPF0229 family.

The protein is UPF0229 protein CPE1333 of Clostridium perfringens (strain 13 / Type A).